Consider the following 505-residue polypeptide: Glycerol kinase (505 aa).

Thr15 is an ADP binding site. 3 residues coordinate ATP: Thr15, Thr16, and Ser17. Thr15 contacts sn-glycerol 3-phosphate. Arg19 serves as a coordination point for ADP. 4 residues coordinate sn-glycerol 3-phosphate: Arg85, Glu86, Tyr136, and Asp249. The glycerol site is built by Arg85, Glu86, Tyr136, Asp249, and Gln250. 2 residues coordinate ADP: Thr271 and Gly314. ATP is bound by residues Thr271, Gly314, Gln318, and Gly415. ADP contacts are provided by Gly415 and Asn419.

The protein belongs to the FGGY kinase family.

The catalysed reaction is glycerol + ATP = sn-glycerol 3-phosphate + ADP + H(+). It participates in polyol metabolism; glycerol degradation via glycerol kinase pathway; sn-glycerol 3-phosphate from glycerol: step 1/1. With respect to regulation, inhibited by fructose 1,6-bisphosphate (FBP). In terms of biological role, key enzyme in the regulation of glycerol uptake and metabolism. Catalyzes the phosphorylation of glycerol to yield sn-glycerol 3-phosphate. In Mycoplasma capricolum subsp. capricolum (strain California kid / ATCC 27343 / NCTC 10154), this protein is Glycerol kinase.